The sequence spans 160 residues: UPF0262 protein Mmar10_1128 (160 aa).

It belongs to the UPF0262 family.

The protein is UPF0262 protein Mmar10_1128 of Maricaulis maris (strain MCS10) (Caulobacter maris).